The chain runs to 445 residues: MKERKFFGTDGIRGKVGSGQMTPELALKLGWAAGRVLSRSGTKKVIIGKDTRISGYMFESALEAGLSAAGLNVMLMGPMPTPAVAYLTRTFRAEAGVVISASHNPYYDNGIKFFSTDGSKLDDNLELEIEAELEKPLVCVESHLLGKVSRIEDARGRYIEYCKGNFPAEHTLTGLKIVVDCAHGATYHIAPAVFRELGAEVIAIGDKPNGMNINDKVGATSMGKICETVIAESADLGIALDGDGDRIMMVNSKGEVIDGDQILYILACDAKSRGVLRGGVVGTLMSNLGLDLALQALDIPFARSKVGDRYVMELLKELDWRIGGENSGHILNLDHGTTGDGIVAGILVLAAMRRQNATLEELTSAMEMLPQVLVNVRFEGEHDPLKSDKVKAAQAQVESELGVRGRVLLRKSGTEPLIRVMVEGDDHSAVLAHANLIADAVKSAS.

The active-site Phosphoserine intermediate is S102. Residues S102, D241, D243, and D245 each coordinate Mg(2+). The residue at position 102 (S102) is a Phosphoserine.

The protein belongs to the phosphohexose mutase family. Mg(2+) serves as cofactor. Post-translationally, activated by phosphorylation.

It carries out the reaction alpha-D-glucosamine 1-phosphate = D-glucosamine 6-phosphate. Its function is as follows. Catalyzes the conversion of glucosamine-6-phosphate to glucosamine-1-phosphate. This is Phosphoglucosamine mutase from Shewanella baltica (strain OS155 / ATCC BAA-1091).